A 156-amino-acid chain; its full sequence is MSDPAKVRRHAERVRELVASVVRSQIKDPRLGMITITDARITADLRDATVFYTVLGDTAAQSGTAAALESAKGMLRSTVGKALGLRHSPTLTFVLDDVQDQVKHIDDLLAQARHADAEVQRLAARAEYAGEAQPYRVEEEPGDSEDETPPSSQDQR.

The tract at residues 129 to 156 (AGEAQPYRVEEEPGDSEDETPPSSQDQR) is disordered.

This sequence belongs to the RbfA family. In terms of assembly, monomer. Binds 30S ribosomal subunits, but not 50S ribosomal subunits or 70S ribosomes.

The protein localises to the cytoplasm. In terms of biological role, one of several proteins that assist in the late maturation steps of the functional core of the 30S ribosomal subunit. Associates with free 30S ribosomal subunits (but not with 30S subunits that are part of 70S ribosomes or polysomes). Required for efficient processing of 16S rRNA. May interact with the 5'-terminal helix region of 16S rRNA. This Salinispora arenicola (strain CNS-205) protein is Ribosome-binding factor A.